We begin with the raw amino-acid sequence, 107 residues long: Small ribosomal subunit protein bS16m (107 aa).

This sequence belongs to the bacterial ribosomal protein bS16 family. Component of the mitochondrial small ribosomal subunit (mt-SSU). Mature N.crassa 74S mitochondrial ribosomes consist of a small (37S) and a large (54S) subunit. The 37S small subunit contains a 16S ribosomal RNA (16S mt-rRNA) and 32 different proteins. The 54S large subunit contains a 23S rRNA (23S mt-rRNA) and 42 different proteins.

It localises to the mitochondrion. Its function is as follows. Component of the mitochondrial ribosome (mitoribosome), a dedicated translation machinery responsible for the synthesis of mitochondrial genome-encoded proteins, including at least some of the essential transmembrane subunits of the mitochondrial respiratory chain. The mitoribosomes are attached to the mitochondrial inner membrane and translation products are cotranslationally integrated into the membrane. The polypeptide is Small ribosomal subunit protein bS16m (cyt-21) (Neurospora crassa (strain ATCC 24698 / 74-OR23-1A / CBS 708.71 / DSM 1257 / FGSC 987)).